We begin with the raw amino-acid sequence, 406 residues long: NADH-quinone oxidoreductase subunit D (406 aa).

It belongs to the complex I 49 kDa subunit family. As to quaternary structure, NDH-1 is composed of 14 different subunits. Subunits NuoB, C, D, E, F, and G constitute the peripheral sector of the complex.

Its subcellular location is the cell inner membrane. The enzyme catalyses a quinone + NADH + 5 H(+)(in) = a quinol + NAD(+) + 4 H(+)(out). NDH-1 shuttles electrons from NADH, via FMN and iron-sulfur (Fe-S) centers, to quinones in the respiratory chain. The immediate electron acceptor for the enzyme in this species is believed to be ubiquinone. Couples the redox reaction to proton translocation (for every two electrons transferred, four hydrogen ions are translocated across the cytoplasmic membrane), and thus conserves the redox energy in a proton gradient. The polypeptide is NADH-quinone oxidoreductase subunit D (Leptospira biflexa serovar Patoc (strain Patoc 1 / Ames)).